The chain runs to 331 residues: MKSSVPSLLIACLVMSLNSYTQQVLYCPPTPAPENVTEFVCNSPSLHEFPTGFPARAKMISVEFTQVSSLGVEALQGLPNLQELHLSNNRLKTLPSGLFRNLPQLHTLDLSTNHLEDLPPEIFTNASSLILLPLSENQLAELHPSWFQTLGELRILGLDHNQVKEIPISCFDKLKKLTSLDLSFNLLRRLAPEMFSGLDNLEKLILESNPIQCIVGRTFHWHPKLTVLSLKNSSLTNIMGFFQPLEQLELLDLSDNELTTMEPPVYKTSANLSLDLSGNPWACDCRLDNLLTWVNEHNIHLYSKEEIVCASPKHFKGECATSLHKSQICPC.

The signal sequence occupies residues 1–23; it reads MKSSVPSLLIACLVMSLNSYTQQ. N-linked (GlcNAc...) asparagine glycosylation occurs at Asn-35. LRR repeat units lie at residues 78 to 101, 103 to 125, 127 to 149, 150 to 173, 175 to 197, 199 to 221, 223 to 244, and 245 to 268; these read LPNL…LFRN, PQLH…IFTN, SSLI…WFQT, LGEL…CFDK, KKLT…MFSG, DNLE…TFHW, PKLT…FFQP, and LEQL…VYKT. The N-linked (GlcNAc...) asparagine glycan is linked to Asn-125. A glycan (N-linked (GlcNAc...) asparagine) is linked at Asn-232. The N-linked (GlcNAc...) asparagine glycan is linked to Asn-271. Residues 279–330 enclose the LRRCT domain; the sequence is NPWACDCRLDNLLTWVNEHNIHLYSKEEIVCASPKHFKGECATSLHKSQICP.

In terms of assembly, homotrimer.

It is found in the secreted. In terms of biological role, inhibits the enzymatic activity of the basic phospholipase A2 (PLA2). This Gloydius brevicaudus siniticus (Chinese mamushi) protein is Phospholipase A2 inhibitor.